The following is a 179-amino-acid chain: Alpha-tubulin N-acetyltransferase (179 aa).

Residues 1-175 enclose the N-acetyltransferase domain; sequence MRVEVVRAPG…NRFVVFDAYF (175 aa). Residues 109–122 and 145–154 each bind acetyl-CoA; these read FYVDEVWQRRGVGL and SPKLFAFLKK.

It belongs to the acetyltransferase ATAT1 family.

It carries out the reaction L-lysyl-[alpha-tubulin] + acetyl-CoA = N(6)-acetyl-L-lysyl-[alpha-tubulin] + CoA + H(+). Specifically acetylates 'Lys-40' in alpha-tubulin on the lumenal side of microtubules. Promotes microtubule destabilization and accelerates microtubule dynamics; this activity may be independent of acetylation activity. Acetylates alpha-tubulin with a slow enzymatic rate, due to a catalytic site that is not optimized for acetyl transfer. Enters the microtubule through each end and diffuses quickly throughout the lumen of microtubules. Acetylates only long/old microtubules because of its slow acetylation rate since it does not have time to act on dynamically unstable microtubules before the enzyme is released. This Phytophthora infestans (strain T30-4) (Potato late blight agent) protein is Alpha-tubulin N-acetyltransferase.